The primary structure comprises 252 residues: 3-dehydroquinate dehydratase (252 aa).

3-dehydroquinate-binding positions include 46–48 (EWR) and Arg82. His143 serves as the catalytic Proton donor/acceptor. The active-site Schiff-base intermediate with substrate is Lys170. 3 residues coordinate 3-dehydroquinate: Arg212, Ser231, and Gln235.

This sequence belongs to the type-I 3-dehydroquinase family. As to quaternary structure, homodimer.

The catalysed reaction is 3-dehydroquinate = 3-dehydroshikimate + H2O. It functions in the pathway metabolic intermediate biosynthesis; chorismate biosynthesis; chorismate from D-erythrose 4-phosphate and phosphoenolpyruvate: step 3/7. Involved in the third step of the chorismate pathway, which leads to the biosynthesis of aromatic amino acids. Catalyzes the cis-dehydration of 3-dehydroquinate (DHQ) and introduces the first double bond of the aromatic ring to yield 3-dehydroshikimate. In Listeria monocytogenes serotype 4b (strain CLIP80459), this protein is 3-dehydroquinate dehydratase.